Here is a 268-residue protein sequence, read N- to C-terminus: Small ribosomal subunit protein eS1 (268 aa).

The segment at 1 to 21 is disordered; the sequence is MAVGKNKGLSKGGKKGGKKKV.

It belongs to the eukaryotic ribosomal protein eS1 family. In terms of assembly, component of the small ribosomal subunit. Mature ribosomes consist of a small (40S) and a large (60S) subunit. The 40S subunit contains about 33 different proteins and 1 molecule of RNA (18S). The 60S subunit contains about 49 different proteins and 3 molecules of RNA (28S, 5.8S and 5S).

Its subcellular location is the cytoplasm. Functionally, essential for oogenesis; required for late follicle cell development. This Drosophila willistoni (Fruit fly) protein is Small ribosomal subunit protein eS1.